Here is a 214-residue protein sequence, read N- to C-terminus: Metalloproteinase inhibitor 3 (214 aa).

The first 26 residues, 1 to 26 (MSVCALTLILGCFLLFLGDISKPAEG), serve as a signal peptide directing secretion. Position 27 (cysteine 27) interacts with Zn(2+). Involved in metalloproteinase-binding stretches follow at residues 27–30 (CTCA) and 91–92 (ES). 6 disulfides stabilise this stretch: cysteine 27–cysteine 94, cysteine 29–cysteine 121, cysteine 39–cysteine 146, cysteine 148–cysteine 195, cysteine 153–cysteine 158, and cysteine 166–cysteine 187. The region spanning 27–146 (CTCAPSHPQD…GLNHRYPLGC (120 aa)) is the NTR domain.

Belongs to the protease inhibitor I35 (TIMP) family.

It is found in the secreted. The protein localises to the extracellular space. The protein resides in the extracellular matrix. Its function is as follows. Complexes with metalloproteinases (such as collagenases) and irreversibly inactivates them by binding to their catalytic zinc cofactor. May form part of a tissue-specific acute response to remodeling stimuli. The sequence is that of Metalloproteinase inhibitor 3 (timp3) from Xenopus laevis (African clawed frog).